The chain runs to 414 residues: Tyrosine--tRNA ligase (414 aa).

Residue tyrosine 35 participates in L-tyrosine binding. Positions 40-49 (PTADSLHVGH) match the 'HIGH' region motif. Tyrosine 164 and glutamine 168 together coordinate L-tyrosine. A 'KMSKS' region motif is present at residues 226-230 (KFGKT). Lysine 229 lines the ATP pocket. Residues 347–414 (TKVIDALVEL…KKKYFVILVK (68 aa)) form the S4 RNA-binding domain.

The protein belongs to the class-I aminoacyl-tRNA synthetase family. TyrS type 1 subfamily. In terms of assembly, homodimer.

It is found in the cytoplasm. The enzyme catalyses tRNA(Tyr) + L-tyrosine + ATP = L-tyrosyl-tRNA(Tyr) + AMP + diphosphate + H(+). Catalyzes the attachment of tyrosine to tRNA(Tyr) in a two-step reaction: tyrosine is first activated by ATP to form Tyr-AMP and then transferred to the acceptor end of tRNA(Tyr). The sequence is that of Tyrosine--tRNA ligase from Mycoplasma capricolum subsp. capricolum (strain California kid / ATCC 27343 / NCTC 10154).